Consider the following 124-residue polypeptide: Large ribosomal subunit protein uL18 (124 aa).

This sequence belongs to the universal ribosomal protein uL18 family. In terms of assembly, part of the 50S ribosomal subunit; part of the 5S rRNA/L5/L18/L25 subcomplex. Contacts the 5S and 23S rRNAs.

This is one of the proteins that bind and probably mediate the attachment of the 5S RNA into the large ribosomal subunit, where it forms part of the central protuberance. The protein is Large ribosomal subunit protein uL18 of Orientia tsutsugamushi (strain Boryong) (Rickettsia tsutsugamushi).